The primary structure comprises 130 residues: Translation initiation factor 5A (130 aa).

Residue Lys36 is modified to Hypusine.

This sequence belongs to the eIF-5A family.

Its subcellular location is the cytoplasm. Its function is as follows. Functions by promoting the formation of the first peptide bond. This Methanothermobacter thermautotrophicus (strain ATCC 29096 / DSM 1053 / JCM 10044 / NBRC 100330 / Delta H) (Methanobacterium thermoautotrophicum) protein is Translation initiation factor 5A (eif5a).